Consider the following 140-residue polypeptide: UPF0132 membrane protein MJ1527 (140 aa).

3 helical membrane-spanning segments follow: residues 40 to 60 (MEGVLCYLLFWISGLIFLLLE), 70 to 90 (AMQSFITFLSLNLIAIIVSAI), and 92 to 112 (IIGWVASTLINIAIIILWIVG).

This sequence belongs to the UPF0132 family.

Its subcellular location is the cell membrane. The protein is UPF0132 membrane protein MJ1527 of Methanocaldococcus jannaschii (strain ATCC 43067 / DSM 2661 / JAL-1 / JCM 10045 / NBRC 100440) (Methanococcus jannaschii).